A 268-amino-acid chain; its full sequence is Microtubule-associated protein RP/EB family member 1 (268 aa).

Ala2 carries the post-translational modification N-acetylalanine. Residues 14–116 (NLSRHDMLAW…FVQWFKKFFD (103 aa)) form the Calponin-homology (CH) domain. Lys66 is subject to N6-crotonyllysine. Tyr124 carries the phosphotyrosine modification. The interval 124–268 (YDPVAARQGQ…GGPQEEQEEY (145 aa)) is interaction with MTUS2/TIP150. The span at 146 to 160 (LNKPKKPLSSSSAAP) shows a compositional bias: low complexity. The segment at 146–191 (LNKPKKPLSSSSAAPQRPISTQRTAAAPKAGPGVVRKNPGVGNGDD) is disordered. Ser155 and Ser165 each carry phosphoserine. The 71-residue stretch at 185 to 255 (GVGNGDDEAA…LYATDEGFVI (71 aa)) folds into the EB1 C-terminal domain. Residues 185–268 (GVGNGDDEAA…GGPQEEQEEY (84 aa)) are interaction with CDK5RAP2. The interval 206-211 (TVEDLE) is interaction with APC. The segment at 208–268 (EDLEKERDFY…GGPQEEQEEY (61 aa)) is DCTN1-binding. Lys220 carries the N6-acetyllysine modification. Positions 220–242 (KLRNIELICQENEGENDPVLQRI) are APC-binding. Residues 232–255 (EGENDPVLQRIVDILYATDEGFVI) form an interaction with SKA1 region.

It belongs to the MAPRE family. In terms of assembly, homodimer. Heterodimer with MAPRE3. Interacts with DCTN1, DCTN2, TERF1 and dynein intermediate chain. Interaction with DIAPH1 and DIAPH2. Interacts (via C-terminal residues 206-211) with APC (via C-terminal residues 2674-2845); the interaction inhibits association with and bundling of F-actin. Interacts with CLASP2, DST, KIF2C and STIM1; probably required for their targeting to the growing microtubule plus ends. Interacts with MTUS2; interaction is direct and probably targets MTUS2 to microtubules. Interacts (via C-terminus) with SKA1 (via SXIP motif); the interaction is direct and stabilizes the kinetochore-microtubule attachment of the SKA1 complex. Interacts with APC2. Interacts with CLASP1. Interacts with CDK5RAP2. Interacts with MACF1. Interacts with RABL2/RABL2A; binds preferentially to GTP-bound RABL2. Interacts with KCNAB2. Interacts (via C-terminus) with CLIP1. Interacts with SLAIN2 and SLAIN1. Interacts with KIF18B; this interaction is required for efficient accumulation of KIF18B at microtubule plus ends. Interacts with MISP. Interacts with KNSTRN. Interacts with NCKAP5L. Interacts with CAMSAP2. Interacts with PDE4DIP isoform 13/MMG8/SMYLE; this interaction is required for its recruitment to the Golgi apparatus. Forms a pericentrosomal complex with AKAP9, CDK5RAP2 and PDE4DIP isoform 13/MMG8/SMYLE; within this complex, MAPRE1 binding to CDK5RAP2 may be mediated by PDE4DIP. Interacts with AKNA. Interacts with GAS2L1, GAS2L2, and GAS2L3. Interacts with RARRES1 and AGBL2. In terms of processing, acetylation at Lys-220 by KAT2B/PCAF promotes dynamic kinetochore-microtubule interactions in early mitosis. Crotonylated by KAT5 during mitosis, promoting astral microtubule plasticity and dynamic connection between astral microtubules and the cortex during mitotic chromosome segregation, thereby ensuring accurate spindle positioning in mitosis. Decrotonylated by HDAC3.

The protein resides in the cytoplasm. It localises to the cytoskeleton. It is found in the microtubule organizing center. Its subcellular location is the centrosome. The protein localises to the golgi apparatus. The protein resides in the spindle. It localises to the spindle pole. In terms of biological role, plus-end tracking protein (+TIP) that binds to the plus-end of microtubules and regulates the dynamics of the microtubule cytoskeleton. Recruits other +TIP proteins to microtubules by binding to a conserved Ser-X-Leu-Pro (SXLP) motif in their polypeptide chains. Promotes cytoplasmic microtubule nucleation and elongation. Involved in mitotic spindle positioning by stabilizing microtubules and promoting dynamic connection between astral microtubules and the cortex during mitotic chromosome segregation. Assists chromosome alignment in metaphase by recruiting the SKA complex to the spindle and stabilizing its interactions with microtubule bundles (K-fibers). Also acts as a regulator of minus-end microtubule organization: interacts with the complex formed by AKAP9 and PDE4DIP, leading to recruit CAMSAP2 to the Golgi apparatus, thereby tethering non-centrosomal minus-end microtubules to the Golgi, an important step for polarized cell movement. Promotes elongation of CAMSAP2-decorated microtubule stretches on the minus-end of microtubules. Acts as a regulator of autophagosome transport via interaction with CAMSAP2. Functions downstream of Rho GTPases and DIAPH1 in stable microtubule formation. May play a role in cell migration. The polypeptide is Microtubule-associated protein RP/EB family member 1 (MAPRE1) (Pongo abelii (Sumatran orangutan)).